We begin with the raw amino-acid sequence, 292 residues long: Protease HtpX homolog (292 aa).

The next 2 helical transmembrane spans lie at 4 to 24 (IALF…VASL) and 38 to 58 (LGAL…ISLL). A Zn(2+)-binding site is contributed by His144. Glu145 is a catalytic residue. His148 provides a ligand contact to Zn(2+). 2 consecutive transmembrane segments (helical) span residues 152 to 172 (GDMV…VFLS) and 199 to 219 (ITTI…VAWF). Glu224 is a Zn(2+) binding site.

This sequence belongs to the peptidase M48B family. Zn(2+) serves as cofactor.

It localises to the cell inner membrane. This chain is Protease HtpX homolog, found in Acidovorax ebreus (strain TPSY) (Diaphorobacter sp. (strain TPSY)).